The chain runs to 400 residues: CinA-like protein (400 aa).

Belongs to the CinA family.

This Escherichia coli (strain K12 / MC4100 / BW2952) protein is CinA-like protein.